The primary structure comprises 150 residues: S-protein homolog 3 (150 aa).

An N-terminal signal peptide occupies residues 1 to 23; that stretch reads MKNILKTQVHVVVIYLLIKIAFS. Residues Asn32 and Asn70 are each glycosylated (N-linked (GlcNAc...) asparagine).

The protein belongs to the plant self-incompatibility (S1) protein family.

It is found in the secreted. In Arabidopsis thaliana (Mouse-ear cress), this protein is S-protein homolog 3.